A 417-amino-acid polypeptide reads, in one-letter code: MTQVDLVVVGKFLFKEKIIDGSIGIEDDKIAKFSLRELKGDKKIKVEKGKIILPGLIDVHVHLRDFNESYKETIASGTKAAIHGGITTVFDMPNTKPPIMDEKTLKLRELIFKKKSYSDYALGFLIAGNEPAKADFYKIFMGASTGGIYSKNFEEDYKKAPDIVSVHAEEYELINRYPERPPIVEVVAIKKALQASKKMKKPLHICHVSTKDGLKEILKANIPWVSFEVTPHHLFLTRRDYERSKLLKVYPPLRDEEDRRYLWENLKSIPIIASDHAPHTLEDKEAGAAGLPGLETEVALLLDAVNKGMITIWDIVAKMSINPARIFKIKNKGWEEGKDADLIVVDMKKEWTIKAENFYTKANWTPYEGWKVKGKVIMTILRGEVVMEDDEIIGKPRGERIVKEGNAQGNLGSSQEH.

Residues His-60 and His-62 each coordinate Zn(2+). Substrate-binding positions include 62-64 (HLR) and Asn-94. Zn(2+)-binding residues include Lys-138, His-167, His-207, and Asp-275. Lys-138 carries the N6-carboxylysine modification. The active site involves Asp-275. Residues His-279 and 289–290 (AG) contribute to the substrate site.

It belongs to the metallo-dependent hydrolases superfamily. DHOase family. Class I DHOase subfamily. Requires Zn(2+) as cofactor.

It catalyses the reaction (S)-dihydroorotate + H2O = N-carbamoyl-L-aspartate + H(+). The protein operates within pyrimidine metabolism; UMP biosynthesis via de novo pathway; (S)-dihydroorotate from bicarbonate: step 3/3. Functionally, catalyzes the reversible cyclization of carbamoyl aspartate to dihydroorotate. In Pyrococcus horikoshii (strain ATCC 700860 / DSM 12428 / JCM 9974 / NBRC 100139 / OT-3), this protein is Dihydroorotase.